Here is a 122-residue protein sequence, read N- to C-terminus: Large ribosomal subunit protein uL14 (122 aa).

The protein belongs to the universal ribosomal protein uL14 family. In terms of assembly, part of the 50S ribosomal subunit. Forms a cluster with proteins L3 and L19. In the 70S ribosome, L14 and L19 interact and together make contacts with the 16S rRNA in bridges B5 and B8.

Its function is as follows. Binds to 23S rRNA. Forms part of two intersubunit bridges in the 70S ribosome. The sequence is that of Large ribosomal subunit protein uL14 from Streptococcus suis (strain 05ZYH33).